A 368-amino-acid chain; its full sequence is Propane 2-monooxygenase, hydroxylase component small subunit (368 aa).

This sequence belongs to the TmoE/XamoE family. As to quaternary structure, the propane 2-monooxygenase multicomponent enzyme system is composed of an electron transfer component and a monooxygenase component interacting with the effector protein MimD. The electron transfer component is composed of a reductase (MimB), and the monooxygenase component is formed by a large subunit (MimA) and a small subunit (MimC). Requires the presence of the chaperonin-like protein MimG to ensure a productive folding, resulting of a soluble MimC, which leads to the active form of MimABCD.

The catalysed reaction is propane + NADH + O2 + H(+) = propan-2-ol + NAD(+) + H2O. It catalyses the reaction acetone + NADH + O2 + H(+) = hydroxyacetone + NAD(+) + H2O. The enzyme catalyses butan-2-one + NADH + O2 + H(+) = 1-hydroxy-2-butanone + NAD(+) + H2O. It carries out the reaction phenol + NADH + O2 + H(+) = hydroquinone + NAD(+) + H2O. Component of the propane 2-monooxygenase multicomponent enzyme system which is involved in the degradation of propane via the O2-dependent hydroxylation of propane. Also involved in the degradation of acetone via the O2-dependent hydroxylation of acetone. Also able to catalyze the oxidation of phenol, methylethylketone (2-butanone), 1-propanol and 2-propanol. The chain is Propane 2-monooxygenase, hydroxylase component small subunit from Mycolicibacterium goodii (Mycobacterium goodii).